Here is a 428-residue protein sequence, read N- to C-terminus: Serine--tRNA ligase (428 aa).

235-237 serves as a coordination point for L-serine; the sequence is TAE. 266–268 contacts ATP; that stretch reads RSE. An L-serine-binding site is contributed by Glu-289. 353 to 356 provides a ligand contact to ATP; that stretch reads EISS. Position 389 (Ser-389) interacts with L-serine.

This sequence belongs to the class-II aminoacyl-tRNA synthetase family. Type-1 seryl-tRNA synthetase subfamily. As to quaternary structure, homodimer. The tRNA molecule binds across the dimer.

The protein localises to the cytoplasm. The enzyme catalyses tRNA(Ser) + L-serine + ATP = L-seryl-tRNA(Ser) + AMP + diphosphate + H(+). It carries out the reaction tRNA(Sec) + L-serine + ATP = L-seryl-tRNA(Sec) + AMP + diphosphate + H(+). It functions in the pathway aminoacyl-tRNA biosynthesis; selenocysteinyl-tRNA(Sec) biosynthesis; L-seryl-tRNA(Sec) from L-serine and tRNA(Sec): step 1/1. Its function is as follows. Catalyzes the attachment of serine to tRNA(Ser). Is also able to aminoacylate tRNA(Sec) with serine, to form the misacylated tRNA L-seryl-tRNA(Sec), which will be further converted into selenocysteinyl-tRNA(Sec). The protein is Serine--tRNA ligase of Shewanella loihica (strain ATCC BAA-1088 / PV-4).